We begin with the raw amino-acid sequence, 77 residues long: Large ribosomal subunit protein bL28 (77 aa).

The protein belongs to the bacterial ribosomal protein bL28 family.

In Cupriavidus necator (strain ATCC 17699 / DSM 428 / KCTC 22496 / NCIMB 10442 / H16 / Stanier 337) (Ralstonia eutropha), this protein is Large ribosomal subunit protein bL28.